The following is a 387-amino-acid chain: Putative serine/threonine-protein kinase (387 aa).

Positions 15-344 (YQIEKLLNRG…ERVLEGQVEI (330 aa)) constitute a Protein kinase domain. ATP is bound by residues 21-29 (LNRGGMDSY) and Lys55. Asp164 (proton acceptor) is an active-site residue. Helical transmembrane passes span 232 to 252 (PPNAQYDIYSLGIILFEMLVG) and 363 to 383 (SIFTIVFIGLIIAAIVLLLIF).

This sequence belongs to the protein kinase superfamily. Ser/Thr protein kinase family.

The protein resides in the cell membrane. The enzyme catalyses L-seryl-[protein] + ATP = O-phospho-L-seryl-[protein] + ADP + H(+). It carries out the reaction L-threonyl-[protein] + ATP = O-phospho-L-threonyl-[protein] + ADP + H(+). This chain is Putative serine/threonine-protein kinase, found in Mycoplasma genitalium (strain ATCC 33530 / DSM 19775 / NCTC 10195 / G37) (Mycoplasmoides genitalium).